The following is a 235-amino-acid chain: Uridylate kinase (235 aa).

8–11 (KFSG) contributes to the ATP binding site. The tract at residues 16-21 (GKEGYG) is involved in allosteric activation by GTP. A UMP-binding site is contributed by glycine 50. ATP-binding residues include glycine 51 and arginine 55. UMP contacts are provided by residues aspartate 71 and 132–139 (TGNPYFTT). Residues threonine 159, tyrosine 165, and aspartate 168 each contribute to the ATP site.

Belongs to the UMP kinase family. Homohexamer.

It localises to the cytoplasm. The catalysed reaction is UMP + ATP = UDP + ADP. It participates in pyrimidine metabolism; CTP biosynthesis via de novo pathway; UDP from UMP (UMPK route): step 1/1. With respect to regulation, allosterically activated by GTP. Inhibited by UTP. Catalyzes the reversible phosphorylation of UMP to UDP. This is Uridylate kinase from Sulfurovum sp. (strain NBC37-1).